We begin with the raw amino-acid sequence, 916 residues long: MQRSIMSFFQPTKEGKAKKPEKETPSSIREKEPPPKVALKERNQVVPESDSPVKRTGRKVAQVLSCEGEDEDEAPGTPKVQKPVSDSEQSSPPSPDTCPENSPVFNCSSPMDISPSGFPKRRTARKQLPKRTIQDTLEEQNEDKTKTAKKRKKEEETPKESLAEAEDIKQKEEKEGDQLIVPSEPTKSPESVTLTKTENIPVCKAGVKLKPQEEEQSKPPARGAKTLSSFFTPRKPAVKTEVKQEESGTLRKEETKGTLDPANYNPSKNNYHPIEDACWKHGQKVPFLAVARTFEKIEEVSARLKMVETLSNLLRSVVALSPPDLLPVLYLSLNRLGPPQQGLELGVGDGVLLKAVAQATGRQLESIRAEVAEKGDVGLVAENSRSTQRLMLPPPPLTISGVFTKFCDIARLTGSASMAKKMDIIKGLFVACRHSEARYIARSLSGRLRLGLAEQSVLAALAQAVSLTPPGQEFPTVVVDAGKGKTAEARKMWLEEQGMILKQTFCEVPDLDRIIPVLLEHGLERLPEHCKLSPGVPLKPMLAHPTRGVSEVLKRFEEVDFTCEYKYDGQRAQIHVLEGGEVKIFSRNQEDNTGKYPDIISRIPKIKHPSVTSFILDTEAVAWDREKKQIQPFQVLTTRKRKEVDASEIQVQVCLYAFDLIYLNGESLVRQPLSRRRQLLRENFVETEGEFVFTTSLDTKDTEQIAEFLEQSVKDSCEGLMVKTLDVDATYEIAKRSHNWLKLKKDYLDGVGDTLDLVVIGAYLGRGKRAGRYGGFLLAAYDEESEELQAICKLGTGFSDEELEEHHQSLQALVLPTPRPYVRIDGAVAPDHWLDPSIVWEVKCADLSLSPIYPAARGLVDKEKGISLRFPRFIRVRKDKQPEQATTSNQVASLYRKQSQIQNQQSSDLDSDVEDY.

The span at 1–10 (MQRSIMSFFQ) shows a compositional bias: polar residues. The interval 1 to 197 (MQRSIMSFFQ…SPESVTLTKT (197 aa)) is disordered. The segment covering 13–43 (KEGKAKKPEKETPSSIREKEPPPKVALKERN) has biased composition (basic and acidic residues). Phosphoserine occurs at positions 49, 51, and 65. Thr-77 bears the Phosphothreonine mark. The span at 99 to 111 (PENSPVFNCSSPM) shows a compositional bias: polar residues. The span at 119-129 (PKRRTARKQLP) shows a compositional bias: basic residues. N6-acetyllysine is present on Lys-144. Basic and acidic residues predominate over residues 153 to 177 (KEEETPKESLAEAEDIKQKEEKEGD). Polar residues predominate over residues 185–197 (PTKSPESVTLTKT). Position 193 is a phosphothreonine (Thr-193). Position 225 is an N6-acetyllysine (Lys-225). Phosphoserine is present on residues Ser-228 and Ser-229. Thr-232 carries the phosphothreonine modification. Residues 236–266 (PAVKTEVKQEESGTLRKEETKGTLDPANYNP) form a disordered region. The span at 238-257 (VKTEVKQEESGTLRKEETKG) shows a compositional bias: basic and acidic residues. The interaction with target DNA stretch occupies residues 447–456 (RLRLGLAEQS). Glu-564 provides a ligand contact to ATP. The N6-AMP-lysine intermediate role is filled by Lys-566. Residues Arg-571 and Glu-619 each coordinate ATP. Glu-619 serves as a coordination point for Mg(2+). Residues 640-642 (KRK) are interaction with target DNA. Residue Glu-718 participates in Mg(2+) binding. Residues Lys-723 and Lys-742 each coordinate ATP. Residue Thr-796 is modified to Phosphothreonine. Residues Ser-799, Ser-906, Ser-907, and Ser-911 each carry the phosphoserine modification. The interval 879–916 (DKQPEQATTSNQVASLYRKQSQIQNQQSSDLDSDVEDY) is disordered. A compositionally biased stretch (polar residues) spans 883-908 (EQATTSNQVASLYRKQSQIQNQQSSD).

The protein belongs to the ATP-dependent DNA ligase family. As to quaternary structure, interacts with PCNA. Interacts with POLB. The cofactor is Mg(2+).

The protein resides in the nucleus. The catalysed reaction is ATP + (deoxyribonucleotide)n-3'-hydroxyl + 5'-phospho-(deoxyribonucleotide)m = (deoxyribonucleotide)n+m + AMP + diphosphate.. Functionally, DNA ligase that seals nicks in double-stranded during DNA repair. Also involved in DNA replication and DNA recombination. This Mus musculus (Mouse) protein is DNA ligase 1 (Lig1).